The primary structure comprises 866 residues: Translation initiation factor IF-2 (866 aa).

2 disordered regions span residues 1 to 63 and 92 to 257; these read MTND…AAVQ and VVRA…RGRS. A compositionally biased stretch (polar residues) spans 26–36; that stretch reads ETGQVRQSFSH. Positions 92–135 are enriched in basic and acidic residues; sequence VVRAAEEAERKRLEEIERRRREEEEARLKVEEEARRKAEEEAAR. Low complexity-rich tracts occupy residues 152-164 and 179-197; these read VAPA…AAPQ and PDAS…TEAP. The 169-residue stretch at 365–533 folds into the tr-type G domain; it reads SRPPVVTVMG…AILLQSEILD (169 aa). Residues 374–381 are G1; it reads GHVDHGKT. Residue 374–381 coordinates GTP; it reads GHVDHGKT. The segment at 399-403 is G2; that stretch reads GITQH. The tract at residues 421–424 is G3; the sequence is DTPG. Residues 421-425 and 475-478 contribute to the GTP site; these read DTPGH and NKMD. A G4 region spans residues 475–478; it reads NKMD. Residues 511-513 form a G5 region; it reads SAK.

This sequence belongs to the TRAFAC class translation factor GTPase superfamily. Classic translation factor GTPase family. IF-2 subfamily.

It is found in the cytoplasm. One of the essential components for the initiation of protein synthesis. Protects formylmethionyl-tRNA from spontaneous hydrolysis and promotes its binding to the 30S ribosomal subunits. Also involved in the hydrolysis of GTP during the formation of the 70S ribosomal complex. This is Translation initiation factor IF-2 from Rhodospirillum rubrum (strain ATCC 11170 / ATH 1.1.1 / DSM 467 / LMG 4362 / NCIMB 8255 / S1).